A 153-amino-acid chain; its full sequence is Probable inactive ribonuclease-like protein 13 (153 aa).

The signal sequence occupies residues 1-22; sequence MAPDVAWLLVLPLVFRPTLVTG.

Belongs to the pancreatic ribonuclease family.

Its subcellular location is the secreted. Functionally, does not exhibit any ribonuclease activity. This Mus musculus (Mouse) protein is Probable inactive ribonuclease-like protein 13 (Rnase13).